Consider the following 98-residue polypeptide: Biogenesis of lysosome-related organelles complex 1 subunit SNN1 (98 aa).

Residues 55–98 (MDEQELLQEEGSLKEELARVNQLKKRLDKLTELYAELARKCGAL) adopt a coiled-coil conformation.

Belongs to the SNAPIN family. Component of the biogenesis of lysosome-related organelles complex-1 (BLOC-1).

The protein resides in the endosome. In terms of biological role, component of the biogenesis of lysosome-related organelles complex-1 (BLOC-1), a complex involved in endosomal cargo sorting. The polypeptide is Biogenesis of lysosome-related organelles complex 1 subunit SNN1 (SNN1) (Eremothecium gossypii (strain ATCC 10895 / CBS 109.51 / FGSC 9923 / NRRL Y-1056) (Yeast)).